The chain runs to 343 residues: Cyclic AMP-AMP-AMP synthase (343 aa).

It belongs to the CD-NTase family. D01 subfamily. The cofactor is Mg(2+).

It catalyses the reaction 3 ATP = 2',3',3'-c-tri-AMP + 3 diphosphate. Functionally, cyclic nucleotide synthase (second messenger synthase) of a CBASS antivirus system. CBASS (cyclic oligonucleotide-based antiphage signaling system) provides immunity against bacteriophage. The CD-NTase protein synthesizes cyclic nucleotides in response to infection; these serve as specific second messenger signals. The signals activate a diverse range of effectors, leading to bacterial cell death and thus abortive phage infection. A type II-C(AAAA) CBASS system. Cyclic trinucleotide synthase that catalyzes the synthesis of 2',3',3'-cyclic AMP-AMP-AMP (2',3',3'-c-tri-AMP or 2'3'3'-cAAA) as the major product, as well as another cyclic AMP(4) 2'-5'-linked minor product that acts as a second messenger for cell signal transduction. The protein is Cyclic AMP-AMP-AMP synthase of Acinetobacter sp. (strain ATCC 27244 / 9458).